The sequence spans 165 residues: Phosphopantetheine adenylyltransferase (165 aa).

Residue serine 10 coordinates substrate. ATP is bound by residues 10 to 11 (SF) and histidine 18. 3 residues coordinate substrate: lysine 42, threonine 79, and arginine 93. Residues 94–96 (GLR), glutamate 104, and 129–135 (VRPITAT) contribute to the ATP site.

It belongs to the bacterial CoaD family. In terms of assembly, homohexamer. Mg(2+) serves as cofactor.

It localises to the cytoplasm. It catalyses the reaction (R)-4'-phosphopantetheine + ATP + H(+) = 3'-dephospho-CoA + diphosphate. Its pathway is cofactor biosynthesis; coenzyme A biosynthesis; CoA from (R)-pantothenate: step 4/5. In terms of biological role, reversibly transfers an adenylyl group from ATP to 4'-phosphopantetheine, yielding dephospho-CoA (dPCoA) and pyrophosphate. The chain is Phosphopantetheine adenylyltransferase from Nitrobacter hamburgensis (strain DSM 10229 / NCIMB 13809 / X14).